We begin with the raw amino-acid sequence, 360 residues long: Phospho-N-acetylmuramoyl-pentapeptide-transferase (360 aa).

10 helical membrane-spanning segments follow: residues 25–45, 73–93, 97–117, 142–162, 167–187, 199–219, 236–256, 263–283, 288–308, and 338–358; these read RGIL…PWMI, TMGG…WADL, YVWV…VDDY, IGAA…TLIV, SVEI…IVGS, GLAI…CYLS, AGEL…FLWF, VFMG…IAVI, IVLF…MIQV, and VIVR…ATLK.

Belongs to the glycosyltransferase 4 family. MraY subfamily. Requires Mg(2+) as cofactor.

Its subcellular location is the cell inner membrane. The catalysed reaction is UDP-N-acetyl-alpha-D-muramoyl-L-alanyl-gamma-D-glutamyl-meso-2,6-diaminopimeloyl-D-alanyl-D-alanine + di-trans,octa-cis-undecaprenyl phosphate = di-trans,octa-cis-undecaprenyl diphospho-N-acetyl-alpha-D-muramoyl-L-alanyl-D-glutamyl-meso-2,6-diaminopimeloyl-D-alanyl-D-alanine + UMP. The protein operates within cell wall biogenesis; peptidoglycan biosynthesis. Its function is as follows. Catalyzes the initial step of the lipid cycle reactions in the biosynthesis of the cell wall peptidoglycan: transfers peptidoglycan precursor phospho-MurNAc-pentapeptide from UDP-MurNAc-pentapeptide onto the lipid carrier undecaprenyl phosphate, yielding undecaprenyl-pyrophosphoryl-MurNAc-pentapeptide, known as lipid I. This chain is Phospho-N-acetylmuramoyl-pentapeptide-transferase, found in Pseudomonas aeruginosa (strain LESB58).